The following is a 569-amino-acid chain: Urease subunit alpha (569 aa).

The region spanning 131-569 is the Urease domain; that stretch reads GGFDSHIHFI…LPMAQRYFLF (439 aa). Positions 136, 138, and 219 each coordinate Ni(2+). Lysine 219 carries the N6-carboxylysine modification. Histidine 221 lines the substrate pocket. 2 residues coordinate Ni(2+): histidine 248 and histidine 274. Residue histidine 322 is the Proton donor of the active site. Aspartate 362 is a Ni(2+) binding site.

Belongs to the metallo-dependent hydrolases superfamily. Urease alpha subunit family. In terms of assembly, heterotrimer of UreA (gamma), UreB (beta) and UreC (alpha) subunits. Three heterotrimers associate to form the active enzyme. The cofactor is Ni cation. In terms of processing, carboxylation allows a single lysine to coordinate two nickel ions.

It is found in the cytoplasm. It carries out the reaction urea + 2 H2O + H(+) = hydrogencarbonate + 2 NH4(+). It participates in nitrogen metabolism; urea degradation; CO(2) and NH(3) from urea (urease route): step 1/1. The chain is Urease subunit alpha from Ruegeria pomeroyi (strain ATCC 700808 / DSM 15171 / DSS-3) (Silicibacter pomeroyi).